The sequence spans 25 residues: Aurein-5.2 (25 aa).

As to expression, expressed by the skin dorsal glands.

Its subcellular location is the secreted. Functionally, has antimicrobial activity against L.lactis and S.uberis. The polypeptide is Aurein-5.2 (Ranoidea raniformis (Southern bell frog)).